Here is a 359-residue protein sequence, read N- to C-terminus: Phosphate acyltransferase (359 aa).

The interval 338 to 359 (LEGAAGRAARPPPPRRASSHDA) is disordered.

This sequence belongs to the PlsX family. Homodimer. Probably interacts with PlsY.

The protein localises to the cytoplasm. The catalysed reaction is a fatty acyl-[ACP] + phosphate = an acyl phosphate + holo-[ACP]. The protein operates within lipid metabolism; phospholipid metabolism. Catalyzes the reversible formation of acyl-phosphate (acyl-PO(4)) from acyl-[acyl-carrier-protein] (acyl-ACP). This enzyme utilizes acyl-ACP as fatty acyl donor, but not acyl-CoA. This Anaeromyxobacter sp. (strain Fw109-5) protein is Phosphate acyltransferase.